Consider the following 382-residue polypeptide: D-galactonate dehydratase (382 aa).

Asp183 contributes to the Mg(2+) binding site. The active-site Proton donor is His185. Mg(2+)-binding residues include Glu209 and Glu235. The active-site Proton acceptor is the His285.

It belongs to the mandelate racemase/muconate lactonizing enzyme family. GalD subfamily. It depends on Mg(2+) as a cofactor.

The enzyme catalyses D-galactonate = 2-dehydro-3-deoxy-D-galactonate + H2O. It functions in the pathway carbohydrate acid metabolism; D-galactonate degradation; D-glyceraldehyde 3-phosphate and pyruvate from D-galactonate: step 1/3. In terms of biological role, catalyzes the dehydration of D-galactonate to 2-keto-3-deoxy-D-galactonate. This is D-galactonate dehydratase from Escherichia fergusonii (strain ATCC 35469 / DSM 13698 / CCUG 18766 / IAM 14443 / JCM 21226 / LMG 7866 / NBRC 102419 / NCTC 12128 / CDC 0568-73).